Reading from the N-terminus, the 90-residue chain is FMRFamide-like neuropeptides 27 (90 aa).

Residues 1–24 (MFSFRKFLAFMLIVIALMASFSSA) form the signal peptide. A propeptide spanning residues 25–36 (QPIDEERPIFME) is cleaved from the precursor. Phe-61 is subject to Phenylalanine amide. The propeptide occupies 65–90 (SSSPSDISMAELRAIYGGGPVEYVQL).

This sequence belongs to the FARP (FMRFamide related peptide) family.

It localises to the secreted. FMRFamides and FMRFamide-like peptides are neuropeptides. The protein is FMRFamide-like neuropeptides 27 of Caenorhabditis briggsae.